We begin with the raw amino-acid sequence, 467 residues long: Indoleacetamide hydrolase (467 aa).

Active-site charge relay system residues include K74 and S149. Residue S173 is the Acyl-ester intermediate of the active site.

This sequence belongs to the amidase family.

It functions in the pathway plant hormone metabolism; auxin biosynthesis. Functionally, hydrolyzes indole-3-acetamide (IAM) into indole-3-acetic acid (IAA). This Agrobacterium vitis (Rhizobium vitis) protein is Indoleacetamide hydrolase (TA-iaaH).